The chain runs to 125 residues: Small ribosomal subunit protein uS12 (125 aa).

Aspartate 89 carries the post-translational modification 3-methylthioaspartic acid.

Belongs to the universal ribosomal protein uS12 family. Part of the 30S ribosomal subunit. Contacts proteins S8 and S17. May interact with IF1 in the 30S initiation complex.

With S4 and S5 plays an important role in translational accuracy. Its function is as follows. Interacts with and stabilizes bases of the 16S rRNA that are involved in tRNA selection in the A site and with the mRNA backbone. Located at the interface of the 30S and 50S subunits, it traverses the body of the 30S subunit contacting proteins on the other side and probably holding the rRNA structure together. The combined cluster of proteins S8, S12 and S17 appears to hold together the shoulder and platform of the 30S subunit. The chain is Small ribosomal subunit protein uS12 from Wigglesworthia glossinidia brevipalpis.